An 865-amino-acid chain; its full sequence is Leucine--tRNA ligase (865 aa).

A 'HIGH' region motif is present at residues 48–58; it reads PYPSGQLHVGH. Residues 626-630 carry the 'KMSKS' region motif; it reads KMSKS. Lys629 is an ATP binding site.

Belongs to the class-I aminoacyl-tRNA synthetase family.

Its subcellular location is the cytoplasm. It catalyses the reaction tRNA(Leu) + L-leucine + ATP = L-leucyl-tRNA(Leu) + AMP + diphosphate. This chain is Leucine--tRNA ligase, found in Gluconobacter oxydans (strain 621H) (Gluconobacter suboxydans).